The primary structure comprises 596 residues: Ran GTPase-activating protein (596 aa).

6 LRR repeats span residues 44-71 (QTTVHYLNLDGNTLGVEAAKAIGEGLKR), 107-134 (GAKLTVLDLSDNALGPNGMRGLEELLRS), 137-164 (CYSLQELLLCNCGLGPEGGSMLSRALID), 203-230 (LKTFEEIVLEQNSIYIEGVEALAESFKH), 231-258 (NPHLRVLNMNDNTLKSEGAEKIAEALPF), and 259-286 (LPLLREMSFGDCLIKTNGAYHFGEALER). The disordered stretch occupies residues 355 to 418 (HQEEEDLEDE…EYSNVAEETA (64 aa)). Residues 387–410 (TTEEADEDSEGDEDDEEDEGDEEY) show a composition bias toward acidic residues. 2 positions are modified to phosphothreonine: Thr433 and Thr434. Residue Ser436 is modified to Phosphoserine.

The protein belongs to the RNA1 family. In terms of assembly, forms a complex with Nup358/RanBP2, sbr/Nxf1 and Nxt1. Associates with the nuclear pore complex via its interaction with Nup358/RanBP2. As to expression, both full-length and truncated protein are expressed in testis (at protein level). Expressed in oocytes and nurse cells (at protein level).

It localises to the cytoplasm. Its subcellular location is the nucleus membrane. Its function is as follows. GTPase activator for the nuclear Ras-related regulatory protein Ran, converting it to the putatively inactive GDP-bound state. Trans-acting factor necessary for meiotic distortion. Distortion is only seen in individuals that carry the RanGAP tandem duplication and express a RanGAP truncated protein. Binding of truncated RanGAP product to the Responder(RSP) locus initiates events that lead to sperm dysfunction. During oogenesis, plays a role in the biogenesis of annulate lamellae containing nuclear pore complex components. The protein is Ran GTPase-activating protein (RanGAP) of Drosophila melanogaster (Fruit fly).